Here is a 338-residue protein sequence, read N- to C-terminus: Glyceraldehyde-3-phosphate dehydrogenase (338 aa).

Residues 11–12 and Gly111 contribute to the NAD(+) site; that span reads TI. 140 to 142 is a D-glyceraldehyde 3-phosphate binding site; that stretch reads SCN. Cys141 acts as the Nucleophile in catalysis. Residue Arg169 participates in NAD(+) binding. Residue 195–196 participates in D-glyceraldehyde 3-phosphate binding; that stretch reads HG. NAD(+) is bound at residue Gln302.

This sequence belongs to the glyceraldehyde-3-phosphate dehydrogenase family. Homotetramer.

The protein resides in the cytoplasm. The catalysed reaction is D-glyceraldehyde 3-phosphate + phosphate + NADP(+) = (2R)-3-phospho-glyceroyl phosphate + NADPH + H(+). It catalyses the reaction D-glyceraldehyde 3-phosphate + phosphate + NAD(+) = (2R)-3-phospho-glyceroyl phosphate + NADH + H(+). The protein operates within carbohydrate degradation; glycolysis; pyruvate from D-glyceraldehyde 3-phosphate: step 1/5. This Methanobacterium bryantii protein is Glyceraldehyde-3-phosphate dehydrogenase (gap).